The following is a 423-amino-acid chain: DUF21 domain-containing protein At2g14520 (423 aa).

At 1–11 (MAVEYECCGTS) the chain is on the extracellular side. One can recognise a CNNM transmembrane domain in the interval 8-191 (CGTSFFIHIA…GKGGELTHDE (184 aa)). The chain crosses the membrane as a helical span at residues 12–32 (FFIHIAVIVLLVLFAGLMSGL). Topologically, residues 33 to 70 (TLGLMSMSLVDLEVLAKSGTPRDRIHAAKILPVVKNQH) are cytoplasmic. Residues 71–91 (LLLCTLLICNAAAMEALPIFL) form a helical membrane-spanning segment. At 92 to 94 (DAL) the chain is on the extracellular side. The helical transmembrane segment at 95–115 (VTAWGAILISVTLILLFGEII) threads the bilayer. Topologically, residues 116–136 (PQSVCSRHGLAIGATVAPFVR) are cytoplasmic. Residues 137–157 (VLVWICLPVAWPISKLLDFLL) form a helical membrane-spanning segment. Topologically, residues 158–423 (GHGRVALFRR…DETDHHFEDL (266 aa)) are extracellular. The region spanning 210-271 (MTPISDTFVI…TINPDEEIQV (62 aa)) is the CBS 1 domain. N-linked (GlcNAc...) asparagine glycans are attached at residues Asn-273 and Asn-322. 2 consecutive CBS domains span residues 275-332 (TIRR…RVDV) and 356-415 (PNRA…IFDE).

The protein localises to the membrane. This Arabidopsis thaliana (Mouse-ear cress) protein is DUF21 domain-containing protein At2g14520 (CBSDUF3).